A 626-amino-acid chain; its full sequence is MHYPKVYDVIVIGGGHAGTEAALAAARMGRQTLLLTHNIETLGQMSCNPAIGGIGKSHLVREIDALGGAMALAADKGGIQFRILNSRKGAAVRATRAQADRVRYKAAIREILENQANLDIFQQAADDLIVEGDTVKGVVTQMGIRFDAKTVVLTTGTFLGGVIHVGLEKSSGGRAGDPPSIALAQRLRELKLPVGRLKTGTPPRIDARSVDFSVMTPQPGDFPSPVMSFMGDVSMHPEQVNCYITHTNEKTHDIIRGGLDRSPMYTGVIEGVGPRYCPSIEDKIHRFSDKDSHQVFLEPEGLDTHELYPNGISTSLPFDVQFELVRSIRGMENAHILRPGYAIEYDYFNPQALKFTLETKAINGLYFAGQINGTTGYEEAGAQGLLAGLNAARRAWEQEEWTPKRDQAYMGVLVDDLITLGTKEPYRMFTSRAEYRLMLREDNADQRLTTIGRELGLVDDVRWAAYCEKMEAVERETSRLQHLWAAPNNPMGKKFVEMTGADLSKECSAIDLLKRPNINFGQIAELTGSEVSQQVGEQIEIAVKYEGYINRQHEDVAQLKRLEETKIPADFDYDVVSGLSREITQKLKTVRPETLAQASRIPGVTPAAVQLVMITIRKNNMTKKTA.

13-18 (GGGHAG) contributes to the FAD binding site. Position 273 to 287 (273 to 287 (GPRYCPSIEDKIHRF)) interacts with NAD(+).

The protein belongs to the MnmG family. In terms of assembly, homodimer. Heterotetramer of two MnmE and two MnmG subunits. FAD serves as cofactor.

It localises to the cytoplasm. Functionally, NAD-binding protein involved in the addition of a carboxymethylaminomethyl (cmnm) group at the wobble position (U34) of certain tRNAs, forming tRNA-cmnm(5)s(2)U34. In Acinetobacter baumannii (strain SDF), this protein is tRNA uridine 5-carboxymethylaminomethyl modification enzyme MnmG.